A 734-amino-acid chain; its full sequence is Rho GTPase-activating protein gacL (734 aa).

The region spanning 141–339 (ISLDTLIAKE…QMILHYDTLF (199 aa)) is the Rho-GAP domain. WD repeat units follow at residues 381–430 (GHNK…FIKE), 539–579 (LFMK…TIHQ), and 585–623 (KRPK…LEHK).

Its subcellular location is the cytoplasm. Rho GTPase-activating protein involved in the signal transduction pathway. The protein is Rho GTPase-activating protein gacL (gacL) of Dictyostelium discoideum (Social amoeba).